The primary structure comprises 458 residues: ATP synthase subunit beta (458 aa).

G148–T155 contributes to the ATP binding site.

Belongs to the ATPase alpha/beta chains family. As to quaternary structure, F-type ATPases have 2 components, CF(1) - the catalytic core - and CF(0) - the membrane proton channel. CF(1) has five subunits: alpha(3), beta(3), gamma(1), delta(1), epsilon(1). CF(0) has three main subunits: a(1), b(2) and c(9-12). The alpha and beta chains form an alternating ring which encloses part of the gamma chain. CF(1) is attached to CF(0) by a central stalk formed by the gamma and epsilon chains, while a peripheral stalk is formed by the delta and b chains.

It is found in the cell inner membrane. It catalyses the reaction ATP + H2O + 4 H(+)(in) = ADP + phosphate + 5 H(+)(out). Its function is as follows. Produces ATP from ADP in the presence of a proton gradient across the membrane. The catalytic sites are hosted primarily by the beta subunits. The sequence is that of ATP synthase subunit beta from Nitrosococcus oceani (strain ATCC 19707 / BCRC 17464 / JCM 30415 / NCIMB 11848 / C-107).